A 416-amino-acid chain; its full sequence is Cysteate synthase (416 aa).

Lys-104 bears the N6-(pyridoxal phosphate)lysine mark. Asn-130 is a binding site for pyridoxal 5'-phosphate.

The protein belongs to the threonine synthase family. Cysteate synthase subfamily. Homotrimer. Pyridoxal 5'-phosphate is required as a cofactor.

The catalysed reaction is O-phospho-L-serine + sulfite + H(+) = L-cysteate + phosphate. Its pathway is cofactor biosynthesis; coenzyme M biosynthesis. Specifically catalyzes the beta-elimination of phosphate from L-phosphoserine and the beta-addition of sulfite to the dehydroalanine intermediate to produce L-cysteate. The sequence is that of Cysteate synthase from Methanosarcina mazei (strain ATCC BAA-159 / DSM 3647 / Goe1 / Go1 / JCM 11833 / OCM 88) (Methanosarcina frisia).